We begin with the raw amino-acid sequence, 695 residues long: Elongation factor G 2 (695 aa).

The 276-residue stretch at 5 to 280 (SKYRNIGIFA…AVVDYLPSPT (276 aa)) folds into the tr-type G domain. Residues 14–21 (AHVDAGKT), 78–82 (DTPGH), and 132–135 (NKLD) contribute to the GTP site.

It belongs to the TRAFAC class translation factor GTPase superfamily. Classic translation factor GTPase family. EF-G/EF-2 subfamily.

The protein localises to the cytoplasm. Catalyzes the GTP-dependent ribosomal translocation step during translation elongation. During this step, the ribosome changes from the pre-translocational (PRE) to the post-translocational (POST) state as the newly formed A-site-bound peptidyl-tRNA and P-site-bound deacylated tRNA move to the P and E sites, respectively. Catalyzes the coordinated movement of the two tRNA molecules, the mRNA and conformational changes in the ribosome. The protein is Elongation factor G 2 of Vibrio vulnificus (strain YJ016).